The following is a 58-amino-acid chain: uncharacterized protein (58 aa).

The chain crosses the membrane as a helical span at residues 12 to 32; sequence VMTLLITISILIVLAVLLVTI.

The protein localises to the cell membrane. This is an uncharacterized protein from Bacillus subtilis (strain 168).